The following is a 231-amino-acid chain: ATP-dependent dethiobiotin synthetase BioD (231 aa).

ATP is bound at residue 13–18 (DVGKTV). Position 17 (T17) interacts with Mg(2+). K38 is an active-site residue. Residues D55, 116–119 (EGAG), and 176–177 (NR) contribute to the ATP site. Mg(2+)-binding residues include D55 and E116.

The protein belongs to the dethiobiotin synthetase family. In terms of assembly, homodimer. Mg(2+) is required as a cofactor.

It localises to the cytoplasm. The enzyme catalyses (7R,8S)-7,8-diammoniononanoate + CO2 + ATP = (4R,5S)-dethiobiotin + ADP + phosphate + 3 H(+). The protein operates within cofactor biosynthesis; biotin biosynthesis; biotin from 7,8-diaminononanoate: step 1/2. Its function is as follows. Catalyzes a mechanistically unusual reaction, the ATP-dependent insertion of CO2 between the N7 and N8 nitrogen atoms of 7,8-diaminopelargonic acid (DAPA, also called 7,8-diammoniononanoate) to form a ureido ring. The sequence is that of ATP-dependent dethiobiotin synthetase BioD from Vibrio cholerae serotype O1 (strain ATCC 39315 / El Tor Inaba N16961).